The following is a 565-amino-acid chain: Sodium/hydrogen exchanger 9B1 (565 aa).

Basic and acidic residues-rich tracts occupy residues 1-14 and 23-86; these read MSEHDVESNKKDDG and MSKD…ETQT. The disordered stretch occupies residues 1–112; it reads MSEHDVESNK…RGTNSYCPPQ (112 aa). The next 13 helical transmembrane spans lie at 122–142, 146–166, 167–187, 206–223, 238–258, 266–286, 311–331, 341–361, 371–391, 419–439, 449–469, 482–502, and 523–543; these read GAALIALWTLLWALIGQEVLP, LFGLVVIFYSAFLGGKILEFI, KIPVVPPLPPLIGMLLAGFTI, ALRNTALTIILVRAGLGL, LSFGPCFLEACSAALFSHFIM, FLLGFVLGAVSPAVVVPNMLM, IVAITGFNTFLSIVFSSGSVI, VLIGVLVGIVMGVFVQYFPSG, AFLVLSMCISAVLGCQHIGLH, IVANTWNVFQPLLFGLVGTEV, IGMCLATLGLALSVRILSTFV, VFIALSWIPKATVQAVLGPLA, and VAFLAILITAPNGALLIGILG.

Belongs to the monovalent cation:proton antiporter 1 (CPA1) transporter (TC 2.A.36) family. Testis-specific. Expressed in the spermatids and spermatozoa (at protein level). Specifically present in the principal piece of sperm tail (at protein level).

It localises to the cell projection. It is found in the cilium. Its subcellular location is the flagellum membrane. In terms of biological role, sperm-specific Na(+)/H(+) exchanger involved in intracellular pH regulation of spermatozoa. Involved in sperm motility and fertility. The chain is Sodium/hydrogen exchanger 9B1 from Mus musculus (Mouse).